The primary structure comprises 310 residues: tRNA uridine(34) hydroxylase (310 aa).

A Rhodanese domain is found at 124–218; the sequence is SDPEVLLIDT…YFEEVPQEES (95 aa). Residue cysteine 178 is the Cysteine persulfide intermediate of the active site.

Belongs to the TrhO family.

The catalysed reaction is uridine(34) in tRNA + AH2 + O2 = 5-hydroxyuridine(34) in tRNA + A + H2O. In terms of biological role, catalyzes oxygen-dependent 5-hydroxyuridine (ho5U) modification at position 34 in tRNAs. The polypeptide is tRNA uridine(34) hydroxylase (Pseudomonas putida (strain GB-1)).